Here is a 328-residue protein sequence, read N- to C-terminus: MYKLQAKRVKAAAGQMWNSNFSKIRQSLKNAYHKCKNQYPNSTRCPTMTSHDCDQEDLNADEEMNLLVMLQDIKTTQLELLSQMTGMICALSKIQEKTDFFQKQMQVLETKMNVNENKQCATAEDIFSVKEDVDALKKKVTELGNQNSCSNVHCLEVLDGEKGKEILELLHKVTQSETLKNTLTSIDSEISSAEPEKVLSYPKSTDHLEEKTISPQIKALEKSNYQNALRSFQKAKSNIYIYPDFNTWIKLTFVHGGKWRFFLSATKLEEFIQWLLSRPTLPPEEPQVITQKYCLFTGPITNLTTICVSVFNYIYCLFGSSKEEVTRL.

Residues 93 to 148 adopt a coiled-coil conformation; the sequence is KIQEKTDFFQKQMQVLETKMNVNENKQCATAEDIFSVKEDVDALKKKVTELGNQNS. Residue T182 is modified to Phosphothreonine.

This is Coiled-coil domain-containing protein 54 (CCDC54) from Bos taurus (Bovine).